The primary structure comprises 876 residues: Radial spoke head 10 homolog B (876 aa).

2 stretches are compositionally biased toward basic and acidic residues: residues 1–16 (MVKEKKKADKKGDKSA) and 57–66 (PKRDSEHTYQ). Positions 1–72 (MVKEKKKADK…HTYQSEDETQ (72 aa)) are disordered. MORN repeat units follow at residues 86–108 (YEGEKVRGLYEGEGFAVFQGGNT), 109–131 (YHGMFSEGLMHGQGTYIWADGLK), 132–154 (YEGDFVKNIPMNHGVYTWPDGST), 155–177 (YEGEVVNGMRNGFGMFKCGTQPV), 179–201 (YIGHWCHGKRHGKGSIYYNQEGT), 204–226 (YEGDWVYNIKKGWGIRCYKSGNI), 227–249 (YEGQWENNMRHGEGRMRWLTTNE), 251–273 (YTGHWEKGIQNGFGTHTWFLKRI), 284–306 (YIGAFVNGFRHGQGKFYYASGAM), and 307–329 (YEGEWVSNKKQGRGRITFKNGRV). Disordered regions lie at residues 360–386 (SQRSRQARGSSVSADREPETLRKLDGS) and 841–876 (EPPEVPAVQPLTPSPPKEDLVSMQTSKASPGKKKKK). The segment covering 373 to 386 (ADREPETLRKLDGS) has biased composition (basic and acidic residues). A coiled-coil region spans residues 752 to 841 (EKYEKSKDEQ…FELDITVLKE (90 aa)).

As to quaternary structure, interacts with RSPH6A. Does not appear to be part of the axonemal radial spoke complexes 1 or 2.

It localises to the cytoplasm. The protein localises to the cytoskeleton. It is found in the cilium axoneme. The protein resides in the cell projection. Its subcellular location is the cilium. It localises to the flagellum. Its function is as follows. May function as part of the axonemal radial spoke complex 3 (RS3). Radial spoke complexes are important for ciliary motility. This Rattus norvegicus (Rat) protein is Radial spoke head 10 homolog B (Rsph10b).